The chain runs to 105 residues: Large ribosomal subunit protein uL24 (105 aa).

It belongs to the universal ribosomal protein uL24 family. As to quaternary structure, part of the 50S ribosomal subunit.

Its function is as follows. One of two assembly initiator proteins, it binds directly to the 5'-end of the 23S rRNA, where it nucleates assembly of the 50S subunit. In terms of biological role, one of the proteins that surrounds the polypeptide exit tunnel on the outside of the subunit. This is Large ribosomal subunit protein uL24 from Xanthobacter autotrophicus (strain ATCC BAA-1158 / Py2).